The sequence spans 596 residues: Chitooligosaccharidolytic beta-N-acetylglucosaminidase (596 aa).

A signal peptide spans 1–23; that stretch reads MWLQAICIYTVFIIIGCGIPTAA. Asn166, Asn264, and Asn377 each carry an N-linked (GlcNAc...) asparagine glycan.

This sequence belongs to the glycosyl hydrolase 20 family.

The enzyme catalyses Hydrolysis of terminal non-reducing N-acetyl-D-hexosamine residues in N-acetyl-beta-D-hexosaminides.. Active during metamorphosis to degrade chitin. This chain is Chitooligosaccharidolytic beta-N-acetylglucosaminidase, found in Bombyx mori (Silk moth).